A 506-amino-acid polypeptide reads, in one-letter code: Histidine ammonia-lyase (506 aa).

The 5-imidazolinone (Ala-Gly) cross-link spans 142-144 (ASG). Ser-143 carries the 2,3-didehydroalanine (Ser) modification.

This sequence belongs to the PAL/histidase family. Post-translationally, contains an active site 4-methylidene-imidazol-5-one (MIO), which is formed autocatalytically by cyclization and dehydration of residues Ala-Ser-Gly.

It is found in the cytoplasm. The enzyme catalyses L-histidine = trans-urocanate + NH4(+). Its pathway is amino-acid degradation; L-histidine degradation into L-glutamate; N-formimidoyl-L-glutamate from L-histidine: step 1/3. This is Histidine ammonia-lyase from Bacillus cereus (strain ATCC 14579 / DSM 31 / CCUG 7414 / JCM 2152 / NBRC 15305 / NCIMB 9373 / NCTC 2599 / NRRL B-3711).